The following is a 150-amino-acid chain: Avidin-related protein 4/5 (150 aa).

Residues 1–24 form the signal peptide; the sequence is MVHTTSPLLLLLLLSLALVAPSLS. The 122-residue stretch at 26-147 folds into the Avidin-like domain; that stretch reads RKCSLTGKWT…GYNNFTRLCT (122 aa). C28 and C105 are oxidised to a cystine. The biotin site is built by N36, S40, Y57, T59, and D63. Residues N67 and N93 are each glycosylated (N-linked (GlcNAc...) asparagine). 2 residues coordinate biotin: S95 and N140. The N-linked (GlcNAc...) asparagine glycan is linked to N141.

Belongs to the avidin/streptavidin family. Homotetramer.

It is found in the secreted. Its function is as follows. Forms a strong non-covalent specific complex with biotin. The protein is Avidin-related protein 4/5 (AVR4) of Gallus gallus (Chicken).